A 225-amino-acid chain; its full sequence is UPF0173 metal-dependent hydrolase Aflv_0488 (225 aa).

The protein belongs to the UPF0173 family.

In Anoxybacillus flavithermus (strain DSM 21510 / WK1), this protein is UPF0173 metal-dependent hydrolase Aflv_0488.